A 132-amino-acid polypeptide reads, in one-letter code: MIQVEIVSPQGMVYSGEVESVNVPTVEGEVGILENHMYLMTLLKPGLVYFNGDDKNGIAVTYGVLDVTPQKVLILAEEAYEVGKLPPASKLKEEFEEAVKKMATAQTMEELKEWEKEAEKARTLLELVEKYR.

Belongs to the ATPase epsilon chain family. As to quaternary structure, F-type ATPases have 2 components, CF(1) - the catalytic core - and CF(0) - the membrane proton channel. CF(1) has five subunits: alpha(3), beta(3), gamma(1), delta(1), epsilon(1). CF(0) has three main subunits: a, b and c.

It localises to the cell inner membrane. In terms of biological role, produces ATP from ADP in the presence of a proton gradient across the membrane. This chain is ATP synthase epsilon chain (atpC), found in Aquifex aeolicus (strain VF5).